The primary structure comprises 221 residues: MPLIFYSSCCFFLVSTSAFCSWVCSRPSQSSLCSLCLSCLFFILLFWSPSTSYLILVFFLLYTCVVLQTQLAYSLSAFMNYIGVLAFFTRLIVQFLRLVLMFVVYCMMHDTVMLQNYSQKNFLVGDSFWEELMSVQPNGTSIFFFLFATFPLRLFYWCYECMHTFFVVTVQFSAFFTIVFWLFLLFYTFFVYEKYEHHFDNITKMHKKLIEELKSLKKDSF.

It localises to the mitochondrion. This is an uncharacterized protein from Paramecium tetraurelia.